The sequence spans 110 residues: Cyclin-dependent protein kinase inhibitor SMR8 (110 aa).

Interacts with CDKA-1 and D-type cyclins. In terms of tissue distribution, expressed in the root vascular tissue.

In terms of biological role, probable cyclin-dependent protein kinase (CDK) inhibitor that functions as a repressor of mitosis in the endoreduplication cell cycle. The chain is Cyclin-dependent protein kinase inhibitor SMR8 from Arabidopsis thaliana (Mouse-ear cress).